The following is a 154-amino-acid chain: Ribonuclease P protein subunit p21 (154 aa).

N-acetylalanine is present on alanine 2. Zn(2+)-binding residues include cysteine 62, cysteine 65, cysteine 92, and cysteine 95. The tract at residues 112–154 is disordered; that stretch reads DRPEAQLGNQADSKPLQPLPNTAHSISDHLPEEKMQIQGSSDQ. Basic and acidic residues predominate over residues 137–146; that stretch reads ISDHLPEEKM.

It belongs to the eukaryotic/archaeal RNase P protein component 4 family. In terms of assembly, RNase P consists of a catalytic RNA moiety and about 10 protein subunits; POP1, POP4, POP5, POP7, RPP14, RPP21, RPP25, RPP30, RPP38 and RPP40. Within the RNase P complex, POP1, POP7 and RPP25 form the 'finger' subcomplex, POP5, RPP14, RPP40 and homodimeric RPP30 form the 'palm' subcomplex, and RPP21, POP4 and RPP38 form the 'wrist' subcomplex. All subunits of the RNase P complex interact with the catalytic RNA.

It is found in the nucleus. The protein localises to the nucleolus. In terms of biological role, component of ribonuclease P, a ribonucleoprotein complex that generates mature tRNA molecules by cleaving their 5'-ends. In Macaca mulatta (Rhesus macaque), this protein is Ribonuclease P protein subunit p21 (RPP21).